The chain runs to 246 residues: Probable transcriptional regulatory protein RB5500 (246 aa).

This sequence belongs to the TACO1 family.

The protein resides in the cytoplasm. The chain is Probable transcriptional regulatory protein RB5500 from Rhodopirellula baltica (strain DSM 10527 / NCIMB 13988 / SH1).